We begin with the raw amino-acid sequence, 54 residues long: STLSSNDAKVVDGKATPLGSFPHVKRAGDFLYVSGTSSRRPDNTIAGAELDSTS.

In terms of assembly, homohexamer.

The enzyme catalyses (2Z,4E)-2-aminomuconate + H2O = (3E)-2-oxohex-3-enedioate + NH4(+). It functions in the pathway xenobiotic degradation; nitrobenzene degradation. Functionally, converts 2-aminomuconate to 4-oxalocrotonate, an intermediate step in the biodegradation of nitrobenzene. The chain is 2-aminomuconate deaminase from Ectopseudomonas oleovorans (Pseudomonas oleovorans).